The following is a 336-amino-acid chain: Holliday junction branch migration complex subunit RuvB (336 aa).

A large ATPase domain (RuvB-L) region spans residues alanine 4–tyrosine 184. Residues isoleucine 23, arginine 24, glycine 65, lysine 68, threonine 69, threonine 70, glutamate 131–tyrosine 133, arginine 174, tyrosine 184, and arginine 221 contribute to the ATP site. Threonine 69 is a binding site for Mg(2+). A small ATPAse domain (RuvB-S) region spans residues glutamine 185–asparagine 255. Positions alanine 258–proline 336 are head domain (RuvB-H). Arginine 294, arginine 313, and arginine 318 together coordinate DNA.

The protein belongs to the RuvB family. Homohexamer. Forms an RuvA(8)-RuvB(12)-Holliday junction (HJ) complex. HJ DNA is sandwiched between 2 RuvA tetramers; dsDNA enters through RuvA and exits via RuvB. An RuvB hexamer assembles on each DNA strand where it exits the tetramer. Each RuvB hexamer is contacted by two RuvA subunits (via domain III) on 2 adjacent RuvB subunits; this complex drives branch migration. In the full resolvosome a probable DNA-RuvA(4)-RuvB(12)-RuvC(2) complex forms which resolves the HJ.

It is found in the cytoplasm. It carries out the reaction ATP + H2O = ADP + phosphate + H(+). Its function is as follows. The RuvA-RuvB-RuvC complex processes Holliday junction (HJ) DNA during genetic recombination and DNA repair, while the RuvA-RuvB complex plays an important role in the rescue of blocked DNA replication forks via replication fork reversal (RFR). RuvA specifically binds to HJ cruciform DNA, conferring on it an open structure. The RuvB hexamer acts as an ATP-dependent pump, pulling dsDNA into and through the RuvAB complex. RuvB forms 2 homohexamers on either side of HJ DNA bound by 1 or 2 RuvA tetramers; 4 subunits per hexamer contact DNA at a time. Coordinated motions by a converter formed by DNA-disengaged RuvB subunits stimulates ATP hydrolysis and nucleotide exchange. Immobilization of the converter enables RuvB to convert the ATP-contained energy into a lever motion, pulling 2 nucleotides of DNA out of the RuvA tetramer per ATP hydrolyzed, thus driving DNA branch migration. The RuvB motors rotate together with the DNA substrate, which together with the progressing nucleotide cycle form the mechanistic basis for DNA recombination by continuous HJ branch migration. Branch migration allows RuvC to scan DNA until it finds its consensus sequence, where it cleaves and resolves cruciform DNA. The chain is Holliday junction branch migration complex subunit RuvB from Klebsiella pneumoniae subsp. pneumoniae (strain ATCC 700721 / MGH 78578).